A 584-amino-acid polypeptide reads, in one-letter code: 65 kDa protein (584 aa).

One can recognise a Toprim domain in the interval 459–548; that stretch reads YDLYIAESAI…TKKVENWLPP (90 aa).

This Zymomonas mobilis subsp. mobilis (strain ATCC 10988 / DSM 424 / LMG 404 / NCIMB 8938 / NRRL B-806 / ZM1) protein is 65 kDa protein.